A 54-amino-acid chain; its full sequence is Hydrophobic protein RCI2A (54 aa).

2 consecutive transmembrane segments (helical) span residues 2–22 (STAT…GVFL) and 32–52 (ICLV…IYVL).

This sequence belongs to the UPF0057 (PMP3) family.

It localises to the membrane. This chain is Hydrophobic protein RCI2A (RCI2A), found in Arabidopsis thaliana (Mouse-ear cress).